The sequence spans 643 residues: Extracellular metalloproteinase 4 (643 aa).

An N-terminal signal peptide occupies residues 1 to 18; the sequence is MHGLLLAGLLALPLNVLA. The propeptide occupies 19 to 254; sequence HPTESHSSGI…VHSVVDYVSA (236 aa). The span at 47–57 shows a compositional bias: basic and acidic residues; it reads TKSDAVPKQDD. Residues 47 to 71 form a disordered region; that stretch reads TKSDAVPKQDDESFTTSSTGDDNVS. The span at 60-71 shows a compositional bias: polar residues; the sequence is FTTSSTGDDNVS. Asn271 and Asn420 each carry an N-linked (GlcNAc...) asparagine glycan. His437 provides a ligand contact to Zn(2+). Glu438 is an active-site residue. Position 441 (His441) interacts with Zn(2+). Asn510 is a glycosylation site (N-linked (GlcNAc...) asparagine).

This sequence belongs to the peptidase M36 family. It depends on Zn(2+) as a cofactor.

It is found in the secreted. Secreted metalloproteinase probably acting as a virulence factor. This is Extracellular metalloproteinase 4 (MEP4) from Trichophyton equinum (Horse ringworm fungus).